The sequence spans 622 residues: Protein lev-9 (622 aa).

Residues 1–16 form the signal peptide; it reads MRFLLLLAISITYASA. Residues 17–61 enclose the WAP; atypical domain; it reads LSCPEVTLSQRPKHCKKECIADEDCKRNKRCMCDGECGLSCVNPI. 19 disulfides stabilise this stretch: Cys-19–Cys-49, Cys-35–Cys-47, Cys-41–Cys-57, Cys-64–Cys-105, Cys-91–Cys-118, Cys-124–Cys-171, Cys-154–Cys-188, Cys-193–Cys-233, Cys-219–Cys-246, Cys-251–Cys-291, Cys-277–Cys-304, Cys-309–Cys-349, Cys-335–Cys-362, Cys-366–Cys-409, Cys-395–Cys-420, Cys-425–Cys-467, Cys-452–Cys-481, Cys-486–Cys-543, and Cys-529–Cys-556. Sushi domains follow at residues 62 to 120, 122 to 190, 191 to 248, 249 to 306, 307 to 364, 365 to 422, 423 to 483, and 484 to 558; these read AMCH…VCRL, LKCG…RCKA, RACP…NCKA, TECS…RCEE, IRCS…RCLA, SCRV…VCSP, LSCH…KCLP, and SWCE…KCVS. Residue Asn-411 is glycosylated (N-linked (GlcNAc...) asparagine). A propeptide spanning residues 576–622 is cleaved from the precursor; it reads SLPGRAVREYVDDELSTHRQHSGKCGIVSGKLERMIMQHSDNGVSVC.

Proteolytic processing of the C-terminus is required for clustering activity but not for secretion nor traffic.

It localises to the synapse. Its subcellular location is the secreted. Scaffolding protein that is necessary to cluster acetylcholine receptors at neuromuscular junctions. The protein is Protein lev-9 (lev-9) of Caenorhabditis elegans.